The chain runs to 126 residues: Protein ApaG (126 aa).

One can recognise an ApaG domain in the interval 2 to 126 (SALDDSIRVE…FRLALPGLLH (125 aa)).

This Shewanella sp. (strain MR-4) protein is Protein ApaG.